The following is a 131-amino-acid chain: Profilin-2 (131 aa).

Belongs to the profilin family. As to quaternary structure, occurs in many kinds of cells as a complex with monomeric actin in a 1:1 ratio. Expressed in the intestinal wall, the spermatheca, and the pharynx.

The protein resides in the cytoplasm. The protein localises to the cytoskeleton. In terms of biological role, binds to actin and affects the structure of the cytoskeleton. At high concentrations, profilin prevents the polymerization of actin, whereas it enhances it at low concentrations. By binding to PIP2, it inhibits the formation of IP3 and DG. The chain is Profilin-2 (pfn-2) from Caenorhabditis elegans.